The chain runs to 311 residues: tRNA dimethylallyltransferase (311 aa).

12–19 (GPTASGKT) contacts ATP. 14–19 (TASGKT) serves as a coordination point for substrate. Interaction with substrate tRNA stretches follow at residues 37–40 (DSAM) and 161–165 (QRIQR).

The protein belongs to the IPP transferase family. Monomer. It depends on Mg(2+) as a cofactor.

It carries out the reaction adenosine(37) in tRNA + dimethylallyl diphosphate = N(6)-dimethylallyladenosine(37) in tRNA + diphosphate. Its function is as follows. Catalyzes the transfer of a dimethylallyl group onto the adenine at position 37 in tRNAs that read codons beginning with uridine, leading to the formation of N6-(dimethylallyl)adenosine (i(6)A). In Coxiella burnetii (strain RSA 331 / Henzerling II), this protein is tRNA dimethylallyltransferase.